The sequence spans 370 residues: Peridinin-chlorophyll a-binding protein 1, chloroplastic (370 aa).

The N-terminal 57 residues, 1–57 (MVRSGKKAVVLAAVAFCATSVVQKSHGFVPSPLRQRAAAAGAAAASAATMFAPAAFA), are a transit peptide targeting the chloroplast. Tandem repeats lie at residues 58 to 220 (DEIG…VPSG) and 221 to 370 (DKIG…AAQR).

As to quaternary structure, homotrimer.

The protein resides in the plastid. It is found in the chloroplast. Water-soluble antenna for capture of solar energy in the blue-green range. Peridinin is an asymmetric carotenoid. The sequence is that of Peridinin-chlorophyll a-binding protein 1, chloroplastic from Amphidinium carterae (Dinoflagellate).